A 330-amino-acid polypeptide reads, in one-letter code: Virulence plasmid integrase pGP8-D (330 aa).

The Core-binding (CB) domain maps to 39-124 (FSLFEVIMHW…SYISLTRFLN (86 aa)). The Tyr recombinase domain occupies 152–327 (VKTDAMNSLQ…SREDNASKKM (176 aa)). Active-site residues include Arg-189, Lys-214, His-279, Arg-282, and His-305. Tyr-314 acts as the O-(3'-phospho-DNA)-tyrosine intermediate in catalysis.

This sequence belongs to the 'phage' integrase family.

The protein is Virulence plasmid integrase pGP8-D of Chlamydia trachomatis serovar L2 (strain ATCC VR-902B / DSM 19102 / 434/Bu).